The following is a 456-amino-acid chain: Arginine biosynthesis bifunctional protein ArgJ, mitochondrial (456 aa).

Substrate is bound by residues T184, K213, T224, E311, N451, and T456. The Nucleophile role is filled by T224.

It belongs to the ArgJ family. In terms of assembly, heterodimer of an alpha and a beta chain. The alpha and beta chains are autoproteolytically processed from a single precursor protein within the mitochondrion.

The protein localises to the mitochondrion matrix. It catalyses the reaction N(2)-acetyl-L-ornithine + L-glutamate = N-acetyl-L-glutamate + L-ornithine. The catalysed reaction is L-glutamate + acetyl-CoA = N-acetyl-L-glutamate + CoA + H(+). The protein operates within amino-acid biosynthesis; L-arginine biosynthesis; L-ornithine and N-acetyl-L-glutamate from L-glutamate and N(2)-acetyl-L-ornithine (cyclic): step 1/1. It participates in amino-acid biosynthesis; L-arginine biosynthesis; N(2)-acetyl-L-ornithine from L-glutamate: step 1/4. Its function is as follows. Catalyzes two activities which are involved in the cyclic version of arginine biosynthesis: the synthesis of acetylglutamate from glutamate and acetyl-CoA, and of ornithine by transacetylation between acetylornithine and glutamate. The chain is Arginine biosynthesis bifunctional protein ArgJ, mitochondrial from Aspergillus niger (strain ATCC MYA-4892 / CBS 513.88 / FGSC A1513).